Here is an 894-residue protein sequence, read N- to C-terminus: Alanine--tRNA ligase (894 aa).

The protein belongs to the class-II aminoacyl-tRNA synthetase family.

It localises to the cytoplasm. It carries out the reaction tRNA(Ala) + L-alanine + ATP = L-alanyl-tRNA(Ala) + AMP + diphosphate. Catalyzes the attachment of alanine to tRNA(Ala) in a two-step reaction: alanine is first activated by ATP to form Ala-AMP and then transferred to the acceptor end of tRNA(Ala). Also edits incorrectly charged Ser-tRNA(Ala) and Gly-tRNA(Ala) via its editing domain. This is Alanine--tRNA ligase (alaS) from Leuconostoc citreum (strain KM20).